The sequence spans 263 residues: MKKIECIIMDWAGTAVDYGCFAPVAAFIKAFAGKGLTIDVEQTRKPMGLPKIQHIRELLTMPEVNEQFINRYRRAWTEEDVVELNHLFEKYLFASLKEYTDPIPGVIPTLEKLRAEGLKIGSTTGYTREMMDVVLPEAQAKGYRVDYCATPNLLPAGRPAPYMIFENLTKLAVPDPDTVVKVGDTIADIQEGVHAKVWSVGVVLGSNEMALTEEETHALPAAELENRIAEVKQRMLAAGASYVIRSIEELPALIQLINSKLNH.

Asp-10 acts as the Nucleophile in catalysis. The Mg(2+) site is built by Asp-10 and Ala-12. Residue Lys-51 is the Schiff-base intermediate with substrate of the active site. Mg(2+) is bound at residue Asp-184.

Belongs to the HAD-like hydrolase superfamily. PhnX family. As to quaternary structure, homodimer. Mg(2+) serves as cofactor.

The catalysed reaction is phosphonoacetaldehyde + H2O = acetaldehyde + phosphate + H(+). Its function is as follows. Involved in phosphonate degradation. The sequence is that of Phosphonoacetaldehyde hydrolase from Bacteroides fragilis (strain ATCC 25285 / DSM 2151 / CCUG 4856 / JCM 11019 / LMG 10263 / NCTC 9343 / Onslow / VPI 2553 / EN-2).